Reading from the N-terminus, the 237-residue chain is Uridylate kinase (237 aa).

Residue 12 to 15 (KLSG) coordinates ATP. G53 serves as a coordination point for UMP. Residues G54 and R58 each contribute to the ATP site. Residues D73 and 134-141 (TGNPYFTT) each bind UMP. ATP contacts are provided by T161, Y167, and D170.

It belongs to the UMP kinase family. In terms of assembly, homohexamer.

It localises to the cytoplasm. It carries out the reaction UMP + ATP = UDP + ADP. Its pathway is pyrimidine metabolism; CTP biosynthesis via de novo pathway; UDP from UMP (UMPK route): step 1/1. Inhibited by UTP. Its function is as follows. Catalyzes the reversible phosphorylation of UMP to UDP. The protein is Uridylate kinase of Rhizorhabdus wittichii (strain DSM 6014 / CCUG 31198 / JCM 15750 / NBRC 105917 / EY 4224 / RW1) (Sphingomonas wittichii).